The sequence spans 302 residues: uncharacterized protein (302 aa).

Transmembrane regions (helical) follow at residues 3–23 (ILGV…SDWF), 39–59 (FVIG…LTSA), 77–97 (SCIC…PIIV), 106–126 (LVYL…FSWI), 128–148 (GVVL…NGSA), 163–183 (FSLV…ELFV), 199–219 (VIGF…VSLA), 227–247 (GMVL…ALAV), and 254–274 (LPAE…LYLF).

Belongs to the Ca(2+):cation antiporter (CaCA) (TC 2.A.19) family.

It localises to the cell membrane. This is an uncharacterized protein from Methanocaldococcus jannaschii (strain ATCC 43067 / DSM 2661 / JAL-1 / JCM 10045 / NBRC 100440) (Methanococcus jannaschii).